Consider the following 420-residue polypeptide: Synaptosomal-associated protein 47 (420 aa).

T-SNARE coiled-coil homology domains follow at residues 110-172 and 357-419; these read AEAA…LTEL and TSEP…MKKL. Residues 338–357 are disordered; sequence ATHCEPSSGSQEGRPLQLQT. The span at 342 to 357 shows a compositional bias: polar residues; it reads EPSSGSQEGRPLQLQT.

The protein belongs to the SVAP1 family. In terms of assembly, forms a complex containing SNAP47, VAMP2 and STX1A. Associates with the BLOC-1 complex. Interacts with BLOC1S6.

It is found in the endomembrane system. It localises to the cytoplasm. Its subcellular location is the perinuclear region. In terms of biological role, may play a role in intracellular membrane fusion. The protein is Synaptosomal-associated protein 47 (SNAP47) of Bos taurus (Bovine).